The sequence spans 148 residues: Receptor activity-modifying protein 1 (148 aa).

A signal peptide spans 1-26; it reads MAPGLRGLPRCGLWLLLAHHLFMVTA. Intrachain disulfides connect C27-C82, C40-C72, and C57-C104. The Extracellular portion of the chain corresponds to 27 to 118; that stretch reads CRDPDYGTLI…RALRDPPNSI (92 aa). A helical transmembrane segment spans residues 119 to 140; sequence LCPFIALPITVTLLMTALVVWR. At 141-148 the chain is on the cytoplasmic side; that stretch reads SKRTEGIV.

It belongs to the RAMP family. In terms of assembly, heterodimer of CALCRL and RAMP1; the interaction induces allosteric modulation of CALCRL function and CGRP1/CALCA and CGRP2/CALCB ligand specificity. Heterodimer of CALCR and RAMP1; interaction forms the AMYR1 receptor complex for amylin/IAPP and CGRP1/CALCA ligands. In terms of tissue distribution, expressed predominantly in the thymus, skeletal muscle, embryonic and adult brain, embryonic and adult lung, and colon.

Its subcellular location is the cell membrane. Functionally, accessory protein that interacts with and modulates the function of G-protein coupled receptors including calcitonin gene-related peptide type 1 receptor (CALCRL) and calcitonin receptor (CALCR). Required for the transport of CALCRL to the plasma membrane. Together with CALCRL, form the receptor complex for the calcitonin gene-related peptides CGRP1/CALCA and CGRP2/CALCB. Together with CALCR, form the AMYR1 receptor complex for amylin/IAPP and CGRP1/CALCA. This chain is Receptor activity-modifying protein 1, found in Mus musculus (Mouse).